The primary structure comprises 259 residues: Probable ATP-dependent transporter ycf16 (259 aa).

In terms of domain architecture, ABC transporter spans 9 to 253 (LEVKNLKAQV…EIKGYDWLNE (245 aa)). Residue 41–48 (GPNGSGKS) coordinates ATP.

The protein belongs to the ABC transporter superfamily. Ycf16 family.

It localises to the plastid. The protein localises to the cyanelle. The sequence is that of Probable ATP-dependent transporter ycf16 (ycf16) from Cyanophora paradoxa.